Here is a 150-residue protein sequence, read N- to C-terminus: Kirola (150 aa).

Met1 bears the N-acetylmethionine mark.

This sequence belongs to the MLP family. Monomer. The N-terminus is blocked.

This is Kirola from Actinidia deliciosa (Kiwi).